A 257-amino-acid chain; its full sequence is 5-keto-4-deoxy-D-glucarate aldolase (257 aa).

His51 acts as the Proton acceptor in catalysis. Substrate is bound at residue Gln152. Glu154 lines the Mg(2+) pocket. Substrate-binding residues include Ser179 and Asp180. Position 180 (Asp180) interacts with Mg(2+).

It belongs to the HpcH/HpaI aldolase family. KDGluc aldolase subfamily. In terms of assembly, homohexamer; trimer of dimers. The cofactor is Mg(2+).

It carries out the reaction 5-dehydro-4-deoxy-D-glucarate = 2-hydroxy-3-oxopropanoate + pyruvate. The enzyme catalyses 2-dehydro-3-deoxy-D-glucarate = 2-hydroxy-3-oxopropanoate + pyruvate. The protein operates within carbohydrate acid metabolism; galactarate degradation; D-glycerate from galactarate: step 2/3. Functionally, catalyzes the reversible retro-aldol cleavage of both 5-keto-4-deoxy-D-glucarate and 2-keto-3-deoxy-D-glucarate to pyruvate and tartronic semialdehyde. In Citrobacter koseri (strain ATCC BAA-895 / CDC 4225-83 / SGSC4696), this protein is 5-keto-4-deoxy-D-glucarate aldolase.